Reading from the N-terminus, the 586-residue chain is MFKVIKCNELNEKLINKKVEINAWVKKIRHHGKFIFLNIRDRYEKAQVLITEEHLLKIAEKIKLEYCIKIQGLLSKRPPNMINENMKTGSFEILAKNIEIISKCNELPFMIEDDNNASENSKLKYRYLDLRRDSLKNKIILRCQATHLIRNFLVKKKFLELETPTFVKSTPEGARDFVIPSRIHKGSFYALPQSPQLYKQLIMIAGFDKYFQIARCYRDEDSRGDRQPEFTQLDLEMSFVKKENIFKLIENMLFLIFKNCLNIKLPKKFKKITYKTAMNKYGSDKPDTRFELTLQDISRNLKNSEFNVFKETLKNKGSIKILIVKDEADKFSRAKINNLEEIAKLYKTQGLYFAKIENNKFSGGIAKFLKTEEQQLIKTYSLENNDIIFFTANKKWETACKAMGQIRIKIANDLGLIDENKFEFLWVYDFPLFEYDENTKTYTPAHHMFSLPKKRYIASLEKIPNKTIGEIYDLVLNGVELGSGSIRIHNKELQQRIFNIIGFQKEKSEDRFGFFLKALEYGAPNHGGIAIGIDRLIMLMTKSTSIKDVILFPKNSFATSPLDDSPSKISNEQLKELGINIVTDDA.

An L-aspartate-binding site is contributed by E172. The aspartate stretch occupies residues 196–199 (QLYK). R218 serves as a coordination point for L-aspartate. Residues 218–220 (RDE) and Q227 each bind ATP. H446 lines the L-aspartate pocket. E480 contacts ATP. Residue R487 coordinates L-aspartate. 532–535 (GIDR) serves as a coordination point for ATP.

Belongs to the class-II aminoacyl-tRNA synthetase family. Type 1 subfamily. As to quaternary structure, homodimer.

It is found in the cytoplasm. It catalyses the reaction tRNA(Asx) + L-aspartate + ATP = L-aspartyl-tRNA(Asx) + AMP + diphosphate. Functionally, aspartyl-tRNA synthetase with relaxed tRNA specificity since it is able to aspartylate not only its cognate tRNA(Asp) but also tRNA(Asn). Reaction proceeds in two steps: L-aspartate is first activated by ATP to form Asp-AMP and then transferred to the acceptor end of tRNA(Asp/Asn). This Borrelia garinii subsp. bavariensis (strain ATCC BAA-2496 / DSM 23469 / PBi) (Borreliella bavariensis) protein is Aspartate--tRNA(Asp/Asn) ligase.